Here is a 313-residue protein sequence, read N- to C-terminus: Glyoxylate/hydroxypyruvate reductase A (313 aa).

Residue R228 is part of the active site. Catalysis depends on H276, which acts as the Proton donor.

It belongs to the D-isomer specific 2-hydroxyacid dehydrogenase family. GhrA subfamily.

It localises to the cytoplasm. The enzyme catalyses glycolate + NADP(+) = glyoxylate + NADPH + H(+). The catalysed reaction is (R)-glycerate + NAD(+) = 3-hydroxypyruvate + NADH + H(+). It carries out the reaction (R)-glycerate + NADP(+) = 3-hydroxypyruvate + NADPH + H(+). Its function is as follows. Catalyzes the NADPH-dependent reduction of glyoxylate and hydroxypyruvate into glycolate and glycerate, respectively. This chain is Glyoxylate/hydroxypyruvate reductase A, found in Serratia proteamaculans (strain 568).